The following is a 718-amino-acid chain: Polyribonucleotide nucleotidyltransferase (718 aa).

Residues aspartate 496 and aspartate 502 each coordinate Mg(2+). The KH domain maps to 563-622 (PRLLTIKIDSDMIGLVIGPGGKTIKGITEETGAKIDIEDDGTVTISAVDENKAKRARNII). The S1 motif domain maps to 632–700 (GDVYAGRITR…NKGRINLTRL (69 aa)).

It belongs to the polyribonucleotide nucleotidyltransferase family. The cofactor is Mg(2+).

The protein localises to the cytoplasm. The catalysed reaction is RNA(n+1) + phosphate = RNA(n) + a ribonucleoside 5'-diphosphate. In terms of biological role, involved in mRNA degradation. Catalyzes the phosphorolysis of single-stranded polyribonucleotides processively in the 3'- to 5'-direction. This Nostoc punctiforme (strain ATCC 29133 / PCC 73102) protein is Polyribonucleotide nucleotidyltransferase.